A 124-amino-acid polypeptide reads, in one-letter code: Large ribosomal subunit protein bL17 (124 aa).

It belongs to the bacterial ribosomal protein bL17 family. As to quaternary structure, part of the 50S ribosomal subunit. Contacts protein L32.

In Acidithiobacillus ferrooxidans (strain ATCC 23270 / DSM 14882 / CIP 104768 / NCIMB 8455) (Ferrobacillus ferrooxidans (strain ATCC 23270)), this protein is Large ribosomal subunit protein bL17.